The following is a 392-amino-acid chain: Formate-dependent phosphoribosylglycinamide formyltransferase (392 aa).

Residues 15–16 (EL) and glutamate 75 contribute to the N(1)-(5-phospho-beta-D-ribosyl)glycinamide site. ATP-binding positions include arginine 107, lysine 148, 153–158 (SSGKGQ), 188–191 (EEFL), and glutamate 196. The region spanning 112 to 302 (DLASGELGLH…EFELHLRAVL (191 aa)) is the ATP-grasp domain. Residues glutamate 261 and glutamate 273 each coordinate Mg(2+). N(1)-(5-phospho-beta-D-ribosyl)glycinamide-binding positions include aspartate 280, lysine 350, and 357–358 (RR).

Belongs to the PurK/PurT family. Homodimer.

It catalyses the reaction N(1)-(5-phospho-beta-D-ribosyl)glycinamide + formate + ATP = N(2)-formyl-N(1)-(5-phospho-beta-D-ribosyl)glycinamide + ADP + phosphate + H(+). Its pathway is purine metabolism; IMP biosynthesis via de novo pathway; N(2)-formyl-N(1)-(5-phospho-D-ribosyl)glycinamide from N(1)-(5-phospho-D-ribosyl)glycinamide (formate route): step 1/1. In terms of biological role, involved in the de novo purine biosynthesis. Catalyzes the transfer of formate to 5-phospho-ribosyl-glycinamide (GAR), producing 5-phospho-ribosyl-N-formylglycinamide (FGAR). Formate is provided by PurU via hydrolysis of 10-formyl-tetrahydrofolate. This chain is Formate-dependent phosphoribosylglycinamide formyltransferase, found in Synechococcus sp. (strain CC9902).